We begin with the raw amino-acid sequence, 395 residues long: Transmembrane protein 79 (395 aa).

The disordered stretch occupies residues 1 to 115 (MTEPETLALL…PPTKLEELPE (115 aa)). At 1–204 (MTEPETLALL…GREALRAVAS (204 aa)) the chain is on the cytoplasmic side. The helical transmembrane segment at 205-225 (VGAALILFPCLLYGAYAFLPF) threads the bilayer. The Extracellular segment spans residues 226 to 244 (DAPRLPTMSSRLIYTLRCG). A helical transmembrane segment spans residues 245–265 (VFATFPIVLGILVYGLSLLCF). Residues 266–290 (AALRPFGEPRREVEIHRQYVAQSVQ) are Cytoplasmic-facing. Residues 291–311 (LFILYFFNLAVLSTYLPQDAL) traverse the membrane as a helical segment. Residues 312–313 (KL) are Extracellular-facing. A helical transmembrane segment spans residues 314–334 (LPLLTGLFAISRLIYWLTFAV). The Cytoplasmic portion of the chain corresponds to 335–343 (GRSFRGFGY). A helical membrane pass occupies residues 344–364 (GLTFLPLLSMLLWNFYYMFVV). Residues 365–395 (EPERMLTASESRLDYPDHARSASDYRPRSRG) lie on the Extracellular side of the membrane.

Its subcellular location is the lysosome. The protein localises to the golgi apparatus. It is found in the trans-Golgi network. The protein resides in the membrane. Functionally, contributes to the epidermal integrity and skin barrier function. Plays a role in the lamellar granule (LG) secretory system and in the stratum corneum (SC) epithelial cell formation. This chain is Transmembrane protein 79 (TMEM79), found in Bos taurus (Bovine).